The primary structure comprises 97 residues: Putative CC-type chemokine U83 (97 aa).

2 cysteine pairs are disulfide-bonded: Cys32–Cys62 and Cys33–Cys76.

This sequence belongs to the intercrine beta (chemokine CC) family. Highly divergent.

This chain is Putative CC-type chemokine U83 (U83), found in Human herpesvirus 6A (strain Uganda-1102) (HHV-6 variant A).